The sequence spans 725 residues: Methionine--tRNA ligase (725 aa).

The 'HIGH' region motif lies at 27–37 (PYANGQIHIGH). The Zn(2+) site is built by cysteine 158, cysteine 161, cysteine 171, and cysteine 174. The short motif at 348-352 (KMSKS) is the 'KMSKS' region element. An ATP-binding site is contributed by lysine 351. One can recognise a tRNA-binding domain in the interval 619–725 (DFAKIDLRIA…SGAKPGMRVK (107 aa)).

This sequence belongs to the class-I aminoacyl-tRNA synthetase family. MetG type 1 subfamily. Homodimer. Zn(2+) serves as cofactor.

The protein resides in the cytoplasm. The catalysed reaction is tRNA(Met) + L-methionine + ATP = L-methionyl-tRNA(Met) + AMP + diphosphate. Its function is as follows. Is required not only for elongation of protein synthesis but also for the initiation of all mRNA translation through initiator tRNA(fMet) aminoacylation. The chain is Methionine--tRNA ligase from Burkholderia mallei (strain NCTC 10247).